The sequence spans 125 residues: Natriuretic peptide GNP1 (125 aa).

The first 25 residues, 1–25, serve as a signal peptide directing secretion; the sequence is MDPRLVRAGSLVLLLALLVQDQGAA. Disordered regions lie at residues 23–78 and 105–125; these read GAAH…PAFK and VSGMGCNKFDPNKGSSSTGKK. Positions 26–85 are excised as a propeptide; it reads HPARAGQKYKPLIRRSEEDSQALGQEGDVAARAADEEEDAAGPGDALRQPAFKTLLASRE. Cysteines 94 and 110 form a disulfide.

This sequence belongs to the natriuretic peptide family. Expressed by the venom gland.

Its subcellular location is the secreted. Functionally, exhibits natriuretic and vasodepressor activity. Acts by stimulating cGMP. The sequence is that of Natriuretic peptide GNP1 from Varanus varius (Lace monitor lizard).